Consider the following 447-residue polypeptide: N-succinylarginine dihydrolase (447 aa).

Residues 19 to 28, Asn-110, and 137 to 138 contribute to the substrate site; these read AGLSFGNEAS and HR. Glu-174 is an active-site residue. Residue Arg-212 participates in substrate binding. His-248 is an active-site residue. Substrate-binding residues include Asp-250 and Asn-359. Catalysis depends on Cys-365, which acts as the Nucleophile.

This sequence belongs to the succinylarginine dihydrolase family. As to quaternary structure, homodimer.

The catalysed reaction is N(2)-succinyl-L-arginine + 2 H2O + 2 H(+) = N(2)-succinyl-L-ornithine + 2 NH4(+) + CO2. The protein operates within amino-acid degradation; L-arginine degradation via AST pathway; L-glutamate and succinate from L-arginine: step 2/5. Functionally, catalyzes the hydrolysis of N(2)-succinylarginine into N(2)-succinylornithine, ammonia and CO(2). The chain is N-succinylarginine dihydrolase from Escherichia coli (strain SMS-3-5 / SECEC).